The primary structure comprises 189 residues: Glycerol-3-phosphate acyltransferase (189 aa).

5 helical membrane-spanning segments follow: residues 1 to 21 (MFWL…AIVL), 50 to 70 (KLAI…VLLA), 77 to 97 (LHAQ…PLYF), 111 to 131 (MLMA…LLTF), and 151 to 171 (LLAW…VMIV).

This sequence belongs to the PlsY family. Probably interacts with PlsX.

Its subcellular location is the cell inner membrane. The enzyme catalyses an acyl phosphate + sn-glycerol 3-phosphate = a 1-acyl-sn-glycero-3-phosphate + phosphate. It functions in the pathway lipid metabolism; phospholipid metabolism. In terms of biological role, catalyzes the transfer of an acyl group from acyl-phosphate (acyl-PO(4)) to glycerol-3-phosphate (G3P) to form lysophosphatidic acid (LPA). This enzyme utilizes acyl-phosphate as fatty acyl donor, but not acyl-CoA or acyl-ACP. In Pseudomonas putida (strain ATCC 47054 / DSM 6125 / CFBP 8728 / NCIMB 11950 / KT2440), this protein is Glycerol-3-phosphate acyltransferase.